The following is a 2224-amino-acid chain: Protein sidekick (2224 aa).

The N-terminal stretch at 1–47 (MLKSAASSLRRRRPKTTITATLAIEMPSQPKLASLLAVLVLLCYCDS) is a signal peptide. At 48-2001 (CFFCYADANL…LQHKPFYRQT (1954 aa)) the chain is on the extracellular side. In terms of domain architecture, Ig-like C2-type 1 spans 72–155 (PRFTTHPSSS…SIFSEKSDVV (84 aa)). Cysteines 95 and 138 form a disulfide. Residues asparagine 164, asparagine 250, asparagine 318, and asparagine 327 are each glycosylated (N-linked (GlcNAc...) asparagine). 4 Ig-like C2-type domains span residues 261–355 (PEII…ARLQ), 359–445 (PPLF…NSAS), 455–541 (PIME…AYLS), and 546–636 (TQII…ARLS). 2 cysteine pairs are disulfide-bonded: cysteine 283/cysteine 336 and cysteine 382/cysteine 433. Residues asparagine 463, asparagine 485, and asparagine 491 are each glycosylated (N-linked (GlcNAc...) asparagine). 2 cysteine pairs are disulfide-bonded: cysteine 476-cysteine 525 and cysteine 567-cysteine 620. 16 N-linked (GlcNAc...) asparagine glycosylation sites follow: asparagine 628, asparagine 661, asparagine 707, asparagine 809, asparagine 870, asparagine 942, asparagine 1019, asparagine 1094, asparagine 1109, asparagine 1172, asparagine 1203, asparagine 1282, asparagine 1329, asparagine 1379, asparagine 1414, and asparagine 1420. 13 Fibronectin type-III domains span residues 643–753 (PPSN…LPQE), 758–855 (PPVG…TKEG), 860–967 (PPTN…TMDD), 971–1065 (EVTG…VEPV), 1069–1164 (APTA…TIQA), 1169–1270 (PPFN…TREA), 1275–1372 (GPLD…TFED), 1376–1469 (VPSN…TNNR), 1474–1570 (APSV…TLPA), 1575–1677 (GVGG…VGEA), 1682–1785 (EPRA…TLPG), 1789–1883 (APLH…GPQD), and 1885–1984 (SPVA…TPSK). Asparagine 1843 and asparagine 1876 each carry an N-linked (GlcNAc...) asparagine glycan. A helical membrane pass occupies residues 2002–2022 (WFMVSLAATSIVIIVMVIAVL). Residues 2023-2224 (CVKSKSYKYK…APLPGFSSFV (202 aa)) lie on the Cytoplasmic side of the membrane. Disordered regions lie at residues 2068 to 2157 (TLNS…RSDP) and 2171 to 2195 (LRQS…PEGS). The residue at position 2071 (serine 2071) is a Phosphoserine. The segment covering 2073–2085 (GTLRSGTLGTLGR) has biased composition (low complexity). Threonine 2074 bears the Phosphothreonine mark. Basic and acidic residues-rich tracts occupy residues 2112–2122 (HSDEESLKCYD) and 2144–2157 (QHSE…RSDP). Phosphoserine occurs at positions 2113 and 2117.

This sequence belongs to the sidekick family.

It is found in the membrane. Participates in homotypic or heterotypic interactions in the eye during pattern formation to prevent extra cells from joining the precluster and differentiating as photoreceptor cells. The polypeptide is Protein sidekick (Drosophila melanogaster (Fruit fly)).